The following is a 404-amino-acid chain: Triose phosphate/phosphate translocator, chloroplastic (404 aa).

The transit peptide at 1–74 directs the protein to the chloroplast; that stretch reads MESRVLSRTT…GPVCSRREKT (74 aa). Over 75 to 98 the chain is Chloroplast intermembrane; it reads AVQPCRAASGSSGEAKTGFLEKYP. Residues 99-119 form a helical membrane-spanning segment; the sequence is ALVTGSFFFMWYFLNVIFNIL. Topologically, residues 120–131 are lumenal; it reads NKKIYNYFPYPY. A helical membrane pass occupies residues 132–152; that stretch reads FVSVIHLFVGVVYCLASWSVG. Residues 153-209 are Chloroplast intermembrane-facing; it reads LPKRAPMDSKLLKLLIPVAVCHAIGHVTSNVSFAAVAVSFTHTIKALEPFFNAAASQ. The helical transmembrane segment at 210–230 threads the bilayer; sequence FVLGQSIPITLWLSLAPVVIG. Residues 231–274 are Lumenal-facing; that stretch reads VSMASLTELSFNWLGFISAMISNVSFTYRSLYSKKAMTDMDSTN. A helical membrane pass occupies residues 275–294; sequence IYAYISIIALFVCLPPAIIV. Residues 295–372 are Chloroplast intermembrane-facing; sequence EGPQLMKHGF…IAFGNKISTQ (78 aa). A helical membrane pass occupies residues 373-393; the sequence is TAIGTSIAIAGVALYSLIKAK. Over 394–404 the chain is Lumenal; that stretch reads MEEEKRQMKST.

Belongs to the TPT transporter family. TPT (TC 2.A.7.9) subfamily. In terms of processing, the N-terminus is blocked.

It localises to the plastid. Its subcellular location is the chloroplast membrane. Its function is as follows. Mediates the export of fixed carbons from the chloroplasts into the cytosol in the form of triose phosphates. The polypeptide is Triose phosphate/phosphate translocator, chloroplastic (Spinacia oleracea (Spinach)).